Here is a 131-residue protein sequence, read N- to C-terminus: Small ribosomal subunit protein uS8 (131 aa).

The protein belongs to the universal ribosomal protein uS8 family. Part of the 30S ribosomal subunit. Contacts proteins S5 and S12.

Functionally, one of the primary rRNA binding proteins, it binds directly to 16S rRNA central domain where it helps coordinate assembly of the platform of the 30S subunit. The chain is Small ribosomal subunit protein uS8 from Novosphingobium aromaticivorans (strain ATCC 700278 / DSM 12444 / CCUG 56034 / CIP 105152 / NBRC 16084 / F199).